The primary structure comprises 87 residues: Putative defensin-like protein 169 (87 aa).

Positions 1-21 (MKKTFSFTVLILFVIPLLVTG) are cleaved as a signal peptide. Cystine bridges form between Cys36–Cys86, Cys48–Cys74, Cys53–Cys80, and Cys57–Cys82.

It belongs to the DEFL family.

The protein localises to the secreted. This chain is Putative defensin-like protein 169, found in Arabidopsis thaliana (Mouse-ear cress).